The primary structure comprises 383 residues: Beta-1,3-galactosyltransferase 4 (383 aa).

The Cytoplasmic segment spans residues 1–8 (MPLSLFRR). A helical transmembrane segment spans residues 9–29 (LLLAALLLVIIWTLFGPSGIG). Over 30 to 383 (EELLSLSLAS…RCRVIAWLHS (354 aa)) the chain is Lumenal. A glycan (N-linked (GlcNAc...) asparagine) is linked at Asn-149.

The protein belongs to the glycosyltransferase 31 family.

It localises to the golgi apparatus membrane. The enzyme catalyses a ganglioside GM2 (d18:1(4E)) + UDP-alpha-D-galactose = a ganglioside GM1 (d18:1(4E)) + UDP + H(+). It carries out the reaction a ganglioside GM2 + UDP-alpha-D-galactose = a ganglioside GM1 + UDP + H(+). It catalyses the reaction a ganglioside GD2 (d18:1(4E)) + UDP-alpha-D-galactose = a ganglioside GD1b (d18:1(4E)) + UDP + H(+). The catalysed reaction is a ganglioside GA2 (d18:1(4E)) + UDP-alpha-D-galactose = a ganglioside GA1 (d18:1(4E)) + UDP + H(+). It functions in the pathway protein modification; protein glycosylation. In terms of biological role, involved in GM1/GD1B/GA1 ganglioside biosynthesis. The chain is Beta-1,3-galactosyltransferase 4 (B3GALT4) from Canis lupus familiaris (Dog).